The chain runs to 129 residues: Large ribosomal subunit protein bL20 (129 aa).

This sequence belongs to the bacterial ribosomal protein bL20 family.

Its function is as follows. Binds directly to 23S ribosomal RNA and is necessary for the in vitro assembly process of the 50S ribosomal subunit. It is not involved in the protein synthesizing functions of that subunit. This chain is Large ribosomal subunit protein bL20, found in Mycolicibacterium smegmatis (strain ATCC 700084 / mc(2)155) (Mycobacterium smegmatis).